The chain runs to 179 residues: Putative DUP240 protein DFP1 (179 aa).

2 consecutive transmembrane segments (helical) span residues 4–24 and 26–46; these read FLLF…SGVL and PAMV…IWSF.

Belongs to the DUP/COS family.

Its subcellular location is the membrane. This is Putative DUP240 protein DFP1 from Saccharomyces cerevisiae (strain ATCC 204508 / S288c) (Baker's yeast).